Reading from the N-terminus, the 365-residue chain is Heme A synthase (365 aa).

A run of 8 helical transmembrane segments spans residues 17 to 37 (AVRI…LVGG), 107 to 127 (VIGI…AIGP), 132 to 152 (ALWG…WMVA), 164 to 184 (VRLA…VWTL), 203 to 223 (AIAL…VAGL), 264 to 283 (QFDH…WHAI), 296 to 316 (GALW…LTVL), and 320 to 340 (PIGL…LAVL). Heme is bound at residue His-267. His-327 is a binding site for heme.

This sequence belongs to the COX15/CtaA family. Type 2 subfamily. As to quaternary structure, interacts with CtaB. Requires heme b as cofactor.

Its subcellular location is the cell membrane. It catalyses the reaction Fe(II)-heme o + 2 A + H2O = Fe(II)-heme a + 2 AH2. The protein operates within porphyrin-containing compound metabolism; heme A biosynthesis; heme A from heme O: step 1/1. In terms of biological role, catalyzes the conversion of heme O to heme A by two successive hydroxylations of the methyl group at C8. The first hydroxylation forms heme I, the second hydroxylation results in an unstable dihydroxymethyl group, which spontaneously dehydrates, resulting in the formyl group of heme A. The sequence is that of Heme A synthase from Rhodopseudomonas palustris (strain HaA2).